We begin with the raw amino-acid sequence, 327 residues long: Glycerol-3-phosphate dehydrogenase [NAD(P)+] (327 aa).

3 residues coordinate NADPH: tryptophan 16, arginine 36, and lysine 108. Sn-glycerol 3-phosphate contacts are provided by lysine 108, glycine 136, and serine 138. Alanine 140 is an NADPH binding site. Residues lysine 191, aspartate 244, serine 254, arginine 255, and asparagine 256 each coordinate sn-glycerol 3-phosphate. Lysine 191 serves as the catalytic Proton acceptor. Arginine 255 provides a ligand contact to NADPH. 2 residues coordinate NADPH: leucine 274 and glutamate 276.

It belongs to the NAD-dependent glycerol-3-phosphate dehydrogenase family.

The protein localises to the cytoplasm. It carries out the reaction sn-glycerol 3-phosphate + NAD(+) = dihydroxyacetone phosphate + NADH + H(+). The catalysed reaction is sn-glycerol 3-phosphate + NADP(+) = dihydroxyacetone phosphate + NADPH + H(+). Its pathway is membrane lipid metabolism; glycerophospholipid metabolism. Its function is as follows. Catalyzes the reduction of the glycolytic intermediate dihydroxyacetone phosphate (DHAP) to sn-glycerol 3-phosphate (G3P), the key precursor for phospholipid synthesis. The sequence is that of Glycerol-3-phosphate dehydrogenase [NAD(P)+] from Bradyrhizobium sp. (strain ORS 278).